The sequence spans 201 residues: Reticulon-like protein B10 (201 aa).

In terms of domain architecture, Reticulon spans 14–201 (VADLIMWKNR…KPTNKIKKMQ (188 aa)). 3 helical membrane-spanning segments follow: residues 25–45 (GGFL…KCGY), 46–66 (SFFP…FLWA), and 135–155 (FLNF…IPFL).

It localises to the endoplasmic reticulum membrane. This is Reticulon-like protein B10 (RTNLB10) from Arabidopsis thaliana (Mouse-ear cress).